The primary structure comprises 82 residues: ATP synthase subunit c (82 aa).

Transmembrane regions (helical) follow at residues 6-26 (AAAS…GPGI) and 57-77 (LAFM…LLFA).

Belongs to the ATPase C chain family. In terms of assembly, F-type ATPases have 2 components, F(1) - the catalytic core - and F(0) - the membrane proton channel. F(1) has five subunits: alpha(3), beta(3), gamma(1), delta(1), epsilon(1). F(0) has four main subunits: a(1), b(1), b'(1) and c(10-14). The alpha and beta chains form an alternating ring which encloses part of the gamma chain. F(1) is attached to F(0) by a central stalk formed by the gamma and epsilon chains, while a peripheral stalk is formed by the delta, b and b' chains.

It localises to the cell inner membrane. In terms of biological role, f(1)F(0) ATP synthase produces ATP from ADP in the presence of a proton or sodium gradient. F-type ATPases consist of two structural domains, F(1) containing the extramembraneous catalytic core and F(0) containing the membrane proton channel, linked together by a central stalk and a peripheral stalk. During catalysis, ATP synthesis in the catalytic domain of F(1) is coupled via a rotary mechanism of the central stalk subunits to proton translocation. Key component of the F(0) channel; it plays a direct role in translocation across the membrane. A homomeric c-ring of between 10-14 subunits forms the central stalk rotor element with the F(1) delta and epsilon subunits. The polypeptide is ATP synthase subunit c (Gloeobacter violaceus (strain ATCC 29082 / PCC 7421)).